The sequence spans 118 residues: NADH-ubiquinone oxidoreductase chain 3 (118 aa).

The next 3 helical transmembrane spans lie at 9–29, 62–82, and 87–107; these read IYLV…FLFA, LVSI…PWAV, and IDLF…IGFL.

This sequence belongs to the complex I subunit 3 family.

The protein resides in the mitochondrion membrane. The catalysed reaction is a ubiquinone + NADH + 5 H(+)(in) = a ubiquinol + NAD(+) + 4 H(+)(out). Functionally, core subunit of the mitochondrial membrane respiratory chain NADH dehydrogenase (Complex I) that is believed to belong to the minimal assembly required for catalysis. Complex I functions in the transfer of electrons from NADH to the respiratory chain. The immediate electron acceptor for the enzyme is believed to be ubiquinone. The polypeptide is NADH-ubiquinone oxidoreductase chain 3 (NAD3) (Pinus sylvestris (Scotch pine)).